The primary structure comprises 136 residues: Aspartate 1-decarboxylase (136 aa).

The active-site Schiff-base intermediate with substrate; via pyruvic acid is the S25. At S25 the chain carries Pyruvic acid (Ser). T57 lines the substrate pocket. Catalysis depends on Y58, which acts as the Proton donor. G73 to A75 contacts substrate.

This sequence belongs to the PanD family. As to quaternary structure, heterooctamer of four alpha and four beta subunits. Requires pyruvate as cofactor. Post-translationally, is synthesized initially as an inactive proenzyme, which is activated by self-cleavage at a specific serine bond to produce a beta-subunit with a hydroxyl group at its C-terminus and an alpha-subunit with a pyruvoyl group at its N-terminus.

The protein localises to the cytoplasm. It carries out the reaction L-aspartate + H(+) = beta-alanine + CO2. It participates in cofactor biosynthesis; (R)-pantothenate biosynthesis; beta-alanine from L-aspartate: step 1/1. Its function is as follows. Catalyzes the pyruvoyl-dependent decarboxylation of aspartate to produce beta-alanine. This chain is Aspartate 1-decarboxylase, found in Acidothermus cellulolyticus (strain ATCC 43068 / DSM 8971 / 11B).